We begin with the raw amino-acid sequence, 238 residues long: Ribonuclease PH (238 aa).

Residues Arg-86 and 124–126 (GTR) each bind phosphate.

It belongs to the RNase PH family. In terms of assembly, homohexameric ring arranged as a trimer of dimers.

It carries out the reaction tRNA(n+1) + phosphate = tRNA(n) + a ribonucleoside 5'-diphosphate. Functionally, phosphorolytic 3'-5' exoribonuclease that plays an important role in tRNA 3'-end maturation. Removes nucleotide residues following the 3'-CCA terminus of tRNAs; can also add nucleotides to the ends of RNA molecules by using nucleoside diphosphates as substrates, but this may not be physiologically important. Probably plays a role in initiation of 16S rRNA degradation (leading to ribosome degradation) during starvation. The polypeptide is Ribonuclease PH (Haemophilus influenzae (strain PittEE)).